Reading from the N-terminus, the 397-residue chain is Argininosuccinate synthase (397 aa).

ATP is bound at residue 9 to 17 (AYSGGLDTS). Tyrosine 87 contributes to the L-citrulline binding site. Glycine 117 is a binding site for ATP. L-aspartate contacts are provided by threonine 119, asparagine 123, and aspartate 124. Asparagine 123 contacts L-citrulline. Arginine 127, serine 175, serine 184, glutamate 257, and tyrosine 269 together coordinate L-citrulline.

It belongs to the argininosuccinate synthase family. Type 1 subfamily. In terms of assembly, homotetramer.

The protein resides in the cytoplasm. The enzyme catalyses L-citrulline + L-aspartate + ATP = 2-(N(omega)-L-arginino)succinate + AMP + diphosphate + H(+). It functions in the pathway amino-acid biosynthesis; L-arginine biosynthesis; L-arginine from L-ornithine and carbamoyl phosphate: step 2/3. The chain is Argininosuccinate synthase from Dictyoglomus turgidum (strain DSM 6724 / Z-1310).